The following is a 323-amino-acid chain: Annexin A5 (323 aa).

Annexin repeat units lie at residues 17-88 (FNDK…ALMV), 89-160 (PAHL…SLVQ), 172-244 (GQVE…AVVK), and 248-319 (SIQG…LLCG).

It belongs to the annexin family.

In terms of biological role, calcium/phospholipid-binding protein which promotes membrane fusion and is involved in exocytosis. This chain is Annexin A5, found in Cynops pyrrhogaster (Japanese fire-bellied newt).